We begin with the raw amino-acid sequence, 389 residues long: Very-long-chain 3-oxoacyl-CoA reductase (389 aa).

A helical membrane pass occupies residues 34–54 (IAVFLLAIGLFHVALKVVSYV). Residues Val-80, Asp-134, Asn-162, Tyr-239, Lys-243, Val-272, and Ser-274 each contribute to the NADP(+) site. The active-site Proton donor is the Tyr-239. Lys-243 acts as the Lowers pKa of active site Tyr in catalysis. A disordered region spans residues 359–389 (QAAGGVADPKNTTAAREGYATESLKNETLKH).

Belongs to the short-chain dehydrogenases/reductases (SDR) family.

It is found in the endoplasmic reticulum membrane. The enzyme catalyses a very-long-chain (3R)-3-hydroxyacyl-CoA + NADP(+) = a very-long-chain 3-oxoacyl-CoA + NADPH + H(+). The protein operates within lipid metabolism; fatty acid biosynthesis. In terms of biological role, component of the microsomal membrane bound fatty acid elongation system, which produces the 26-carbon very long-chain fatty acids (VLCFA) from palmitate. Catalyzes the reduction of the 3-ketoacyl-CoA intermediate that is formed in each cycle of fatty acid elongation. VLCFAs serve as precursors for ceramide and sphingolipids. The polypeptide is Very-long-chain 3-oxoacyl-CoA reductase (Yarrowia lipolytica (strain CLIB 122 / E 150) (Yeast)).